A 276-amino-acid chain; its full sequence is Diaminopimelate epimerase (276 aa).

N13, Q46, and N66 together coordinate substrate. C75 serves as the catalytic Proton donor. Substrate is bound by residues 76-77 (GN), N159, N192, and 210-211 (ER). Residue C219 is the Proton acceptor of the active site. Substrate is bound at residue 220 to 221 (GS).

It belongs to the diaminopimelate epimerase family. In terms of assembly, homodimer.

It localises to the cytoplasm. The catalysed reaction is (2S,6S)-2,6-diaminopimelate = meso-2,6-diaminopimelate. It functions in the pathway amino-acid biosynthesis; L-lysine biosynthesis via DAP pathway; DL-2,6-diaminopimelate from LL-2,6-diaminopimelate: step 1/1. Its function is as follows. Catalyzes the stereoinversion of LL-2,6-diaminopimelate (L,L-DAP) to meso-diaminopimelate (meso-DAP), a precursor of L-lysine and an essential component of the bacterial peptidoglycan. The sequence is that of Diaminopimelate epimerase from Pseudoalteromonas atlantica (strain T6c / ATCC BAA-1087).